Reading from the N-terminus, the 449-residue chain is Probable pectate lyase P59 (449 aa).

Residues 1 to 22 (MGGPKIKYSFLFLCITFATIIP) form the signal peptide. N-linked (GlcNAc...) asparagine glycosylation is found at Asn56, Asn80, and Asn81. Ca(2+) contacts are provided by Asp245, Asp269, and Asp273. Arg325 is a catalytic residue.

It belongs to the polysaccharide lyase 1 family. Requires Ca(2+) as cofactor. Expressed in anthers and pollen.

The catalysed reaction is Eliminative cleavage of (1-&gt;4)-alpha-D-galacturonan to give oligosaccharides with 4-deoxy-alpha-D-galact-4-enuronosyl groups at their non-reducing ends.. It participates in glycan metabolism; pectin degradation; 2-dehydro-3-deoxy-D-gluconate from pectin: step 2/5. Might be needed during pollen development and tube growth. The chain is Probable pectate lyase P59 (LAT59) from Solanum lycopersicum (Tomato).